A 220-amino-acid polypeptide reads, in one-letter code: N-(5'-phosphoribosyl)anthranilate isomerase (220 aa).

It belongs to the TrpF family.

It catalyses the reaction N-(5-phospho-beta-D-ribosyl)anthranilate = 1-(2-carboxyphenylamino)-1-deoxy-D-ribulose 5-phosphate. It functions in the pathway amino-acid biosynthesis; L-tryptophan biosynthesis; L-tryptophan from chorismate: step 3/5. The polypeptide is N-(5'-phosphoribosyl)anthranilate isomerase (Agrobacterium fabrum (strain C58 / ATCC 33970) (Agrobacterium tumefaciens (strain C58))).